Consider the following 88-residue polypeptide: Small ribosomal subunit protein uS15 (88 aa).

The protein belongs to the universal ribosomal protein uS15 family. Part of the 30S ribosomal subunit. Forms a bridge to the 50S subunit in the 70S ribosome, contacting the 23S rRNA.

One of the primary rRNA binding proteins, it binds directly to 16S rRNA where it helps nucleate assembly of the platform of the 30S subunit by binding and bridging several RNA helices of the 16S rRNA. Its function is as follows. Forms an intersubunit bridge (bridge B4) with the 23S rRNA of the 50S subunit in the ribosome. In Flavobacterium psychrophilum (strain ATCC 49511 / DSM 21280 / CIP 103535 / JIP02/86), this protein is Small ribosomal subunit protein uS15.